Reading from the N-terminus, the 316-residue chain is tRNA dimethylallyltransferase (316 aa).

17–24 (GPTASGKT) is a binding site for ATP. 19-24 (TASGKT) provides a ligand contact to substrate. Interaction with substrate tRNA regions lie at residues 42 to 45 (DSAL), 166 to 170 (QRLSR), and 247 to 252 (RCVGYR).

This sequence belongs to the IPP transferase family. As to quaternary structure, monomer. Requires Mg(2+) as cofactor.

It carries out the reaction adenosine(37) in tRNA + dimethylallyl diphosphate = N(6)-dimethylallyladenosine(37) in tRNA + diphosphate. Its function is as follows. Catalyzes the transfer of a dimethylallyl group onto the adenine at position 37 in tRNAs that read codons beginning with uridine, leading to the formation of N6-(dimethylallyl)adenosine (i(6)A). The sequence is that of tRNA dimethylallyltransferase from Salmonella typhi.